The primary structure comprises 1047 residues: Protein masquerade (1047 aa).

Residues 1-30 form the signal peptide; the sequence is MPRHSSTMSRLVLPLIFSILLVSKPSPSQA. Residues 54–87 are CLIP 1; that stretch reads KDCPGVCVHTLATLICYEVLDDVACPSPSMKCCI. Intrachain disulfides connect Cys-56-Cys-85, Cys-60-Cys-78, and Cys-69-Cys-86. The N-linked (GlcNAc...) asparagine glycan is linked to Asn-95. 2 stretches are compositionally biased toward low complexity: residues 98 to 139 and 148 to 175; these read AVRA…STTP and KRPA…VATA. The disordered stretch occupies residues 98-189; that stretch reads AVRATTTPKT…KEEATKADDA (92 aa). The segment covering 176 to 189 has biased composition (basic and acidic residues); it reads KPKDKEEATKADDA. Residues 192–224 are CLIP 2; it reads DCTGVCVADRIAEYCEAYLTSDGLCKEGTKCCV. Intrachain disulfides connect Cys-193/Cys-222, Cys-197/Cys-216, and Cys-206/Cys-223. Asn-251 carries an N-linked (GlcNAc...) asparagine glycan. Residues 252-335 are disordered; sequence QTLSEKSAPA…PLSNKLKSGQ (84 aa). The span at 263-280 shows a compositional bias: low complexity; the sequence is SSSTSTTSTTTTTSTTTT. The N-linked (GlcNAc...) asparagine glycan is linked to Asn-287. Positions 307–325 are enriched in acidic residues; the sequence is AAEEEEEQETEEDGEEEEP. The interval 343–374 is CLIP 3; it reads ECEGECMNGIFAIFCDDIDSDAFCPGEESCCV. Disulfide bonds link Cys-344–Cys-372, Cys-348–Cys-366, and Cys-357–Cys-373. The segment at 376–428 is disordered; the sequence is GGASEATPSSKAPPTKPAIKHAPKPAAKPARPASPPPAPPSSTSGGGGGGDFL. Positions 457–492 are CLIP 4; it reads RCPGFCLLNIMAAFCERPSVLVSTPTTCAKGSVCCD. Cystine bridges form between Cys-458/Cys-490, Cys-462/Cys-484, and Cys-471/Cys-491. The interval 498 to 527 is disordered; sequence APKPKLPPPTPSPTASPTAPPYVLPNTPSP. A compositionally biased stretch (pro residues) spans 501-527; the sequence is PKLPPPTPSPTASPTAPPYVLPNTPSP. Positions 532 to 567 are CLIP 5; sequence ECPGSCIVSLLSFTCFKNAEMTDLFRCKRSGQICCA. Intrachain disulfides connect Cys-533–Cys-565, Cys-537–Cys-558, and Cys-546–Cys-566. An N-linked (GlcNAc...) asparagine glycan is attached at Asn-582. The interval 583–673 is disordered; that stretch reads DTAYYPAPPP…TTTTTTTTPR (91 aa). Pro residues-rich tracts occupy residues 588-606, 613-638, and 650-661; these read PAPP…PQTP, NPPP…PPAP, and GLPPQPQPPMTT. Over residues 662–672 the composition is skewed to low complexity; it reads PPTTTTTTTTP. Disulfide bonds link Cys-682–Cys-916, Cys-829–Cys-845, Cys-930–Cys-1001, Cys-961–Cys-981, and Cys-991–Cys-1019. 2 N-linked (GlcNAc...) asparagine glycosylation sites follow: Asn-726 and Asn-794. Positions 803–1043 are peptidase S1; it reads VVGGEDGENG…FIGWINQIIS (241 aa).

Belongs to the peptidase S1 family. CLIP subfamily. In terms of processing, proteolytically cleaved and thereafter secreted.

The protein localises to the secreted. The protein resides in the cell projection. It localises to the axon. In embryogenesis, has a role in somatic muscle attachment and in the development of axonal pathways probably by stabilizing cell-matrix adhesion and/or by acting as a competitive antagonist of serine proteases. In Drosophila melanogaster (Fruit fly), this protein is Protein masquerade.